A 79-amino-acid chain; its full sequence is Short neurotoxin 1/5 (79 aa).

The N-terminal stretch at 1-21 (MKTLLLTLVMVTIMCLDLGYT) is a signal peptide. 4 disulfides stabilise this stretch: C24–C41, C34–C59, C63–C71, and C72–C77.

Belongs to the three-finger toxin family. Short-chain subfamily. Type III alpha-neurotoxin sub-subfamily. As to expression, expressed by the venom gland.

The protein resides in the secreted. Functionally, binds with high affinity to muscle nicotinic acetylcholine receptor (nAChR) and inhibit acetylcholine from binding to the receptor, thereby impairing neuromuscular transmission. Compete with the binding of alpha-bungarotoxin on muscle AChR (from Torpedo) with an IC(50) of 0.31 uM (SNTX1) and 3.1 uM (SNTX5). Is able of exerting muscle paralysis, spasms and increased respiration. The protein is Short neurotoxin 1/5 of Pseudonaja textilis (Eastern brown snake).